Reading from the N-terminus, the 67-residue chain is Small ribosomal subunit protein eS27 (67 aa).

Zn(2+) contacts are provided by cysteine 22, cysteine 25, cysteine 41, and cysteine 44. The segment at cysteine 22–cysteine 44 adopts a C4-type zinc-finger fold.

This sequence belongs to the eukaryotic ribosomal protein eS27 family. As to quaternary structure, part of the 30S ribosomal subunit. Requires Zn(2+) as cofactor.

This is Small ribosomal subunit protein eS27 from Pyrobaculum neutrophilum (strain DSM 2338 / JCM 9278 / NBRC 100436 / V24Sta) (Thermoproteus neutrophilus).